Here is a 927-residue protein sequence, read N- to C-terminus: Disks large homolog 1 (927 aa).

Residues R4–P64 enclose the L27 domain. T115 carries the post-translational modification Phosphothreonine. Residues S122, S138, and S158 each carry the phosphoserine modification. Residues P162–Y212 form an interaction with SH3 domains region. The interval E224 to R546 is required for interaction with MARCHF2. PDZ domains follow at residues G230 to I317, G325 to D412, and T474 to A555. S232 carries the phosphoserine modification. At Y399 the chain carries Phosphotyrosine. Phosphoserine is present on residues S568, S573, S575, S579, S598, S619, S707, S710, and S857. The SH3 domain occupies K581–E651. In terms of domain architecture, Guanylate kinase-like spans R683 to M858. The interval K691 to Q719 is disordered. The segment covering H704 to R717 has biased composition (polar residues).

It belongs to the MAGUK family. Homotetramer. Interacts (via guanylate kinase-like domain) with DLGAP1, DLGAP2, DLGAP3, DLGAP4 and MAP1A. Interacts (via guanylate kinase-like domain) with KIF13B. May interact with HTR2A. Interacts (via PDZ domains) with GRIA1. Interacts (via PDZ domains) with GRIN2A. Interacts (via PDZ domains) with KCND2 and KCND3. Interacts (via PDZ domains) with KCNA1, KCNA2, KCNA3 and KCNA4. Interacts (via PDZ domains) with ADGRA3. Interacts with KCNF1. Interacts with CAMK2. Interacts with cytoskeleton-associated protein EPB41. Interacts with cytoskeleton-associated protein EZR. Found in a complex with KCNA5 and CAV3. Found in a complex with APC and CTNNB1. Interacts (via PDZ domains) with APC. Interacts with CDH1 through binding to PIK3R1. Forms multiprotein complexes with CASK, LIN7A, LIN7B, LIN7C, APBA1, and KCNJ12. Interacts with TOPK. Forms a tripartite complex composed of DLG1, MPP7 and LIN7 (LIN7A or LIN7C). May interact with TJAP1. Interacts with PTEN. Interacts with FRMPD4 (via C-terminus). Interacts with LRFN1, LRFN2 and LRFN4. Interacts with SFPQ. Interacts (via PDZ domains) with ADGRA2 (via PDZ-binding motif). Interacts with ADAM10; this interaction recruits ADAM10 to the cell membrane during long-term depression in hippocampal neurons. Interacts with DGKI (via PDZ-binding motif). Interacts (via PDZ domains) with MARCHF2 (via PDZ domain); the interaction leads to DLG1 ubiqtuitination and degradation. Interacts (via N-terminus) with MPP3; this interaction connects CADM1 with DLG1 and links CADM1 with the regulatory subunit of phosphoinositide-3-kinase (PI3K) by forming a multiprotein complex and participates in cell spreading. Phosphorylated by MAPK12. Phosphorylation of Ser-232 regulates association with GRIN2A. Post-translationally, ubiquitinated; by MARCHF2 which results in its degradation.

It is found in the cell membrane. It localises to the basolateral cell membrane. The protein resides in the endoplasmic reticulum membrane. The protein localises to the postsynaptic density. Its subcellular location is the synapse. It is found in the sarcolemma. It localises to the apical cell membrane. The protein resides in the cell junction. The protein localises to the cytoplasm. Its function is as follows. Essential multidomain scaffolding protein required for normal development. Recruits channels, receptors and signaling molecules to discrete plasma membrane domains in polarized cells. Promotes epithelial cell layer barrier function via maintaining cell-cell adhesion. May also play a role in adherens junction assembly, signal transduction, cell proliferation, synaptogenesis and lymphocyte activation. Regulates the excitability of cardiac myocytes by modulating the functional expression of Kv4 channels. Functional regulator of Kv1.5 channel. During long-term depression in hippocampal neurons, it recruits ADAM10 to the plasma membrane. The protein is Disks large homolog 1 (DLG1) of Canis lupus familiaris (Dog).